A 260-amino-acid chain; its full sequence is Thrombin-like enzyme bhalternin (260 aa).

The first 18 residues, 1 to 18 (MVLIRVLANLLILQLSYA), serve as a signal peptide directing secretion. A propeptide spanning residues 19-24 (QKASEL) is cleaved from the precursor. A Peptidase S1 domain is found at 25–251 (VIGGDECNIN…YSEWIQSIIA (227 aa)). Cystine bridges form between Cys31–Cys165, Cys50–Cys66, Cys144–Cys212, Cys176–Cys191, and Cys202–Cys227. Asn44 carries an N-linked (GlcNAc...) asparagine glycan. The N-linked (GlcNAc...) asparagine glycan is linked to Asn81.

The protein belongs to the peptidase S1 family. Snake venom subfamily. In terms of assembly, monomer. Expressed by the venom gland.

It is found in the secreted. Inhibited by benzamidine and partially inhibited by EDTA. Its function is as follows. Thrombin-like snake venom serine protease that induces blood clotting in vitro, defibrinogenation in vivo (by intraperitoneal injection into mice), albuminolytic and fibrinogenolytic activities. Preferentially cleaves the alpha chain of fibrinogen (FGA). Causes hemolysis in the heart, causes apparent hyperemia and lymphocytic interstitial pneumonitis in the lung, causes necrosis and inflammatory infiltrate in the liver, and causes glomerular congestion in the kidney. Also provokes a drastic myonecrosis. In Bothrops alternatus (Urutu), this protein is Thrombin-like enzyme bhalternin.